The sequence spans 1449 residues: Spike glycoprotein (1449 aa).

A signal peptide spans 1–28; sequence MKKLFVVLVVMPLIYGDNFPCSKLTNRT. S1 stretches follow at residues 17 to 776 and 29 to 776; these read DNFP…FYYY and IGNH…FYYY. Topologically, residues 29-1390 are virion surface; sequence IGNHWNLIET…NRIETYVKWP (1362 aa). The tract at residues 657 to 801 is interaction with host ANPEP; it reads VIYEEGDNIV…DSNDVDCEPV (145 aa). Positions 777–1449 are S2; that stretch reads SIYNYTNDRT…YEPIEKVHVH (673 aa). Positions 1022–1043 are fusion peptide; that stretch reads AGGITLGALGGGAVAIPFAVAV. A heptad repeat 1 (HR1) region spans residues 1037–1156; sequence IPFAVAVQAR…QVDRLITGRL (120 aa). Coiled-coil stretches lie at residues 1104–1148 and 1338–1380; these read QDVV…DAQV and TYLN…LEWL. The tract at residues 1305–1402 is heptad repeat 2 (HR2); the sequence is PDYIDINQTV…VWLLIGLVVI (98 aa). A helical transmembrane segment spans residues 1391 to 1410; that stretch reads WYVWLLIGLVVIFCIPLLLF. The Intravirion segment spans residues 1411–1449; it reads CCCSTGCCGCIGCLGSCCHSICSRRQFENYEPIEKVHVH. The KxHxx signature appears at 1445–1449; it reads KVHVH.

It belongs to the alphacoronaviruses spike protein family. In terms of assembly, homotrimer. During virus morphogenesis, found in a complex with M and HE proteins. Interacts with host ANPEP.

The protein localises to the virion membrane. Its subcellular location is the host endoplasmic reticulum-Golgi intermediate compartment membrane. Its function is as follows. S1 region attaches the virion to the cell membrane by interacting with host ANPEP/aminopeptidase N, initiating the infection. Binding to the receptor probably induces conformational changes in the S glycoprotein unmasking the fusion peptide of S2 region and activating membranes fusion. S2 region belongs to the class I viral fusion protein. Under the current model, the protein has at least 3 conformational states: pre-fusion native state, pre-hairpin intermediate state, and post-fusion hairpin state. During viral and target cell membrane fusion, the coiled coil regions (heptad repeats) regions assume a trimer-of-hairpins structure, positioning the fusion peptide in close proximity to the C-terminal region of the ectodomain. The formation of this structure appears to drive apposition and subsequent fusion of viral and target cell membranes. The sequence is that of Spike glycoprotein from Porcine transmissible gastroenteritis coronavirus (strain Miller) (TGEV).